The sequence spans 483 residues: GTPase Der (483 aa).

EngA-type G domains are found at residues 3-167 and 212-387; these read FTLA…GEER and LRIA…EIWN. GTP is bound by residues 9–16, 56–60, 119–122, 218–225, 265–269, and 330–333; these read GRPNVGKS, DTAGL, NKAE, GRPNAGKS, DTAGM, and NKWD. Residues 388–472 enclose the KH-like domain; sequence RRISTGRLNR…PIRLSLRTSD (85 aa).

It belongs to the TRAFAC class TrmE-Era-EngA-EngB-Septin-like GTPase superfamily. EngA (Der) GTPase family. As to quaternary structure, associates with the 50S ribosomal subunit.

Functionally, GTPase that plays an essential role in the late steps of ribosome biogenesis. The polypeptide is GTPase Der (Brucella abortus (strain 2308)).